We begin with the raw amino-acid sequence, 170 residues long: Ureidoglycolate lyase (170 aa).

The protein belongs to the ureidoglycolate lyase family. As to quaternary structure, homodimer. The cofactor is Ni(2+).

The catalysed reaction is (S)-ureidoglycolate = urea + glyoxylate. It participates in nitrogen metabolism; (S)-allantoin degradation. Catalyzes the catabolism of the allantoin degradation intermediate (S)-ureidoglycolate, generating urea and glyoxylate. Involved in the utilization of allantoin as nitrogen source. The sequence is that of Ureidoglycolate lyase from Pseudomonas syringae pv. tomato (strain ATCC BAA-871 / DC3000).